We begin with the raw amino-acid sequence, 145 residues long: Large ribosomal subunit protein uL13 (145 aa).

The protein belongs to the universal ribosomal protein uL13 family. In terms of assembly, part of the 50S ribosomal subunit.

This protein is one of the early assembly proteins of the 50S ribosomal subunit, although it is not seen to bind rRNA by itself. It is important during the early stages of 50S assembly. This is Large ribosomal subunit protein uL13 from Brevibacillus brevis (strain 47 / JCM 6285 / NBRC 100599).